The primary structure comprises 150 residues: uncharacterized protein (150 aa).

This is an uncharacterized protein from Homo sapiens (Human).